The sequence spans 289 residues: Iodotyrosine deiodinase 1 (289 aa).

The helical transmembrane segment at 1–21 (MYFLTPILVAILCILVVWIFK) threads the bilayer. Residues 47–58 (DLKDSSDLHQAE) are compositionally biased toward basic and acidic residues. A disordered region spans residues 47–69 (DLKDSSDLHQAEEDADEWQESEE). Over residues 59-69 (EDADEWQESEE) the composition is skewed to acidic residues. FMN contacts are provided by residues 100–104 (RRSVR), serine 128, and 128–129 (SG). 3,5-diiodo-L-tyrosine contacts are provided by alanine 130, glutamate 157, tyrosine 161, and lysine 182. Positions 130, 157, 161, and 182 each coordinate 3-iodo-L-tyrosine. FMN is bound by residues 237–239 (TTT) and arginine 279.

It belongs to the nitroreductase family. As to quaternary structure, homodimer. Requires FMN as cofactor.

Its subcellular location is the cell membrane. The protein localises to the cytoplasmic vesicle membrane. It catalyses the reaction 2 iodide + L-tyrosine + 2 NADP(+) = 3,5-diiodo-L-tyrosine + 2 NADPH + H(+). The enzyme catalyses iodide + L-tyrosine + NADP(+) = 3-iodo-L-tyrosine + NADPH. The catalysed reaction is 3-iodo-L-tyrosine + iodide + NADP(+) = 3,5-diiodo-L-tyrosine + NADPH + H(+). It carries out the reaction L-tyrosine + chloride + NADP(+) = 3-chloro-L-tyrosine + NADPH. It catalyses the reaction bromide + L-tyrosine + NADP(+) = 3-bromo-L-tyrosine + NADPH. Catalyzes the dehalogenation of halotyrosines such as 3-bromo-L-tyrosine, 3-chloro-L-tyrosine, 3-iodo-L-tyrosine and 3,5-diiodo-L-tyrosine. During thyroid hormone biosynthesis, facilitates iodide salvage by catalysing the oxidative NADPH-dependent deiodination of the halogenated by-products of thyroid hormone production, monoiodotyrosine (L-MIT) and diiodotyrosine (L-DIT). The scavanged iodide can then reenter the hormone-producing pathways. Acts more efficiently on 3-iodo-L-tyrosine than 3,5-diiodo-L-tyrosine. In Pongo abelii (Sumatran orangutan), this protein is Iodotyrosine deiodinase 1 (IYD).